We begin with the raw amino-acid sequence, 930 residues long: Translation initiation factor IF-2 (930 aa).

Residues 51 to 325 are disordered; sequence PGAGKSAAKP…TREIGGVKVP (275 aa). 2 stretches are compositionally biased toward low complexity: residues 56 to 111 and 121 to 162; these read SAAK…KPGV and TPAA…GNNP. A compositionally biased stretch (gly residues) spans 263–295; the sequence is RPGGGPGGGPGRPGGPGGRGGRGNAQGAFGRGG. Over residues 296–307 the composition is skewed to basic residues; that stretch reads GPRKGRKSKRAK. Over residues 308–320 the composition is skewed to basic and acidic residues; the sequence is RQEFEQQHTREIG. A tr-type G domain is found at 422–596; it reads PRPAVVTVMG…LTADAALELT (175 aa). Residues 431 to 438 form a G1 region; it reads GHVDHGKT. Position 431–438 (431–438) interacts with GTP; that stretch reads GHVDHGKT. A G2 region spans residues 456-460; sequence GITQH. Residues 481 to 484 are G3; it reads DTPG. GTP-binding positions include 481 to 485 and 535 to 538; these read DTPGH and NKID. Positions 535–538 are G4; that stretch reads NKID. The tract at residues 571–573 is G5; the sequence is SAR.

This sequence belongs to the TRAFAC class translation factor GTPase superfamily. Classic translation factor GTPase family. IF-2 subfamily.

It localises to the cytoplasm. In terms of biological role, one of the essential components for the initiation of protein synthesis. Protects formylmethionyl-tRNA from spontaneous hydrolysis and promotes its binding to the 30S ribosomal subunits. Also involved in the hydrolysis of GTP during the formation of the 70S ribosomal complex. The polypeptide is Translation initiation factor IF-2 (Micrococcus luteus (strain ATCC 4698 / DSM 20030 / JCM 1464 / CCM 169 / CCUG 5858 / IAM 1056 / NBRC 3333 / NCIMB 9278 / NCTC 2665 / VKM Ac-2230) (Micrococcus lysodeikticus)).